Consider the following 854-residue polypeptide: MAQAIFEALEGMDNQTVLAVQSLLDGQGAVPDPTGQSVNAPPAIQPLDDEDVFLCGKCKKQFNSLPAFMTHKREQCQGNAPALATVSLATNSIYPPSAAPTAVQQAPTPANRQISTYITVPPSPLIQTLVQGNILVSDDVLMSAMSAFTSLDQPMPQGPPPVQSSLNMHSVPSYLTQPPPPPPPPPPLPPPPPPQPPPPPPQSLGPPGRPNPGGNGVVEVYSAAAPLAGSGTVEIQALGMQPYPPLEVPNQCVEPPVYPTPTVYSPGKQGFKPKGPNPAAPMTSATGGTVATFDSPATLKTRRAKGARGLPEAAGKPKAQKLKCSYCDKSFTKNFDLQQHIRSHTGEKPFQCIACGRAFAQKSNVKKHMQTHKVWPPGHSGGTVSRNSVTVQVMALNPSRQEDEESTGLGQPLPGAPQPQALSTAGEEEGDKPESKQVVLIDSSYLCQFCPSKFSTYFQLKSHMTQHKNEQVYKCVVKSCAQTFPKLDTFLEHIKSHQEELSYRCHLCGKDFPSLYDLGVHQYSHSLLPQHSPKKDNAVYKCVKCVNKYSTPEALEHHLQTATHNFPCPHCQKVFPCERYLRRHLPTHGSGGRFKCQVCKKFFRREHYLKLHAHIHSGEKPYKCSVCESAFNRKDKLKRHMLIHEPFKKYKCPFSTHTGCSKEFNRPDKLKAHILSHSGMKLHKCALCSKSFSRRAHLAEHQRAHTGNYKFRCAGCAKGFSRHKYLKDHRCRLGPQKDKDLQTRRPPQRRAAPRSCGSGGRKVLTPLPDPLGLEELKDTGAGLVPEAVPGKPPFAEPDAVLSIVVGGAVGAETELVVPGHAEGLGSNLALAELQAGAEGPCAMLAVPVYIQASE.

The C2H2-type 1; atypical zinc-finger motif lies at 53–76 (FLCGKCKKQFNSLPAFMTHKREQC). Residues 152–217 (DQPMPQGPPP…GRPNPGGNGV (66 aa)) form a disordered region. A compositionally biased stretch (polar residues) spans 163 to 176 (QSSLNMHSVPSYLT). Over residues 177–210 (QPPPPPPPPPPLPPPPPPQPPPPPPQSLGPPGRP) the composition is skewed to pro residues. 2 C2H2-type zinc fingers span residues 322–344 (LKCS…IRSH) and 350–372 (FQCI…MQTH). The tract at residues 399 to 434 (SRQEDEESTGLGQPLPGAPQPQALSTAGEEEGDKPE) is disordered. The segment covering 408 to 422 (GLGQPLPGAPQPQAL) has biased composition (low complexity). 9 consecutive C2H2-type zinc fingers follow at residues 445–467 (YLCQ…MTQH), 473–497 (YKCV…IKSH), 503–525 (YRCH…QYSH), 540–564 (YKCV…TATH), 566–588 (FPCP…LPTH), 594–616 (FKCQ…AHIH), 622–644 (YKCS…MLIH), 650–677 (YKCP…ILSH), and 683–705 (HKCA…QRAH). The disordered stretch occupies residues 731–763 (CRLGPQKDKDLQTRRPPQRRAAPRSCGSGGRKV).

Belongs to the krueppel C2H2-type zinc-finger protein family. Binds DNA and to the STAT3 promoter.

The protein localises to the nucleus. Its function is as follows. Transcriptional activator of STAT3 involved in the regulation of immune homeostasis. Also able to activate STAT1 transcription. The protein is Zinc finger protein 341 (ZNF341) of Homo sapiens (Human).